The sequence spans 143 residues: Large ribosomal subunit protein uL15 (143 aa).

Positions 1-52 are disordered; that stretch reads MELNTIQPADGAKHYKRRVGRGIGSGLGKTAGRGHKGQKSRSGGFHKVGFEG. Over residues 21 to 31 the composition is skewed to gly residues; it reads RGIGSGLGKTA.

It belongs to the universal ribosomal protein uL15 family. Part of the 50S ribosomal subunit.

Binds to the 23S rRNA. The polypeptide is Large ribosomal subunit protein uL15 (Herminiimonas arsenicoxydans).